We begin with the raw amino-acid sequence, 24 residues long: Chaperonin GroEL (24 aa).

This sequence belongs to the chaperonin (HSP60) family. In terms of assembly, forms a cylinder of 14 subunits composed of two heptameric rings stacked back-to-back. Interacts with the co-chaperonin GroES.

It localises to the cytoplasm. It carries out the reaction ATP + H2O + a folded polypeptide = ADP + phosphate + an unfolded polypeptide.. In terms of biological role, together with its co-chaperonin GroES, plays an essential role in assisting protein folding. The GroEL-GroES system forms a nano-cage that allows encapsulation of the non-native substrate proteins and provides a physical environment optimized to promote and accelerate protein folding. This chain is Chaperonin GroEL, found in Acinetobacter calcoaceticus.